The sequence spans 568 residues: Oxygen-dependent choline dehydrogenase (568 aa).

Residue 6 to 35 (DYIIVGAGSAGCVLADRLSASGEHYILLLE) participates in FAD binding. Histidine 470 serves as the catalytic Proton acceptor.

It belongs to the GMC oxidoreductase family. Requires FAD as cofactor.

It catalyses the reaction choline + A = betaine aldehyde + AH2. It carries out the reaction betaine aldehyde + NAD(+) + H2O = glycine betaine + NADH + 2 H(+). It participates in amine and polyamine biosynthesis; betaine biosynthesis via choline pathway; betaine aldehyde from choline (cytochrome c reductase route): step 1/1. Functionally, involved in the biosynthesis of the osmoprotectant glycine betaine. Catalyzes the oxidation of choline to betaine aldehyde and betaine aldehyde to glycine betaine at the same rate. In Photobacterium profundum (strain SS9), this protein is Oxygen-dependent choline dehydrogenase.